Consider the following 486-residue polypeptide: O-methyltransferase gedA (486 aa).

S-adenosyl-L-methionine is bound by residues 298 to 299 (GG), Asp321, 353 to 354 (SF), and Arg369. Catalysis depends on His373, which acts as the Proton acceptor.

It belongs to the class I-like SAM-binding methyltransferase superfamily. Cation-independent O-methyltransferase family.

The enzyme catalyses emodin + S-adenosyl-L-methionine = questin + S-adenosyl-L-homocysteine + H(+). It participates in secondary metabolite biosynthesis. O-methyltransferase; part of the gene cluster that mediates the biosynthesis of geodin, an intermediate in the biosynthesis of other natural products. The pathway begins with the synthesis of atrochrysone thioester by the polyketide synthase (PKS) gedC. The atrochrysone carboxyl ACP thioesterase gedB then breaks the thioester bond and releases the atrochrysone carboxylic acid from gedC. The atrochrysone carboxylic acid is then converted to atrochrysone which is further transformed into emodinanthrone. The next step is performed by the emodinanthrone oxygenase gedH that catalyzes the oxidation of emodinanthrone to emodin. Emodin O-methyltransferase encoded probably by gedA then catalyzes methylation of the 8-hydroxy group of emodin to form questin. Ring cleavage of questin by questin oxidase gedK leads to desmethylsulochrin via several intermediates including questin epoxide. Another methylation step probably catalyzed by methyltransferase gedG leads to the formation of sulochrin which is further converted to dihydrogeodin by the sulochrin halogenase gedL. Finally, the dihydrogeodin oxidase gedJ catalyzes the stereospecific phenol oxidative coupling reaction converting dihydrogeodin to geodin. The polypeptide is O-methyltransferase gedA (Aspergillus terreus (strain NIH 2624 / FGSC A1156)).